Here is a 427-residue protein sequence, read N- to C-terminus: Gamma-glutamyl phosphate reductase (427 aa).

The protein belongs to the gamma-glutamyl phosphate reductase family.

It localises to the cytoplasm. The enzyme catalyses L-glutamate 5-semialdehyde + phosphate + NADP(+) = L-glutamyl 5-phosphate + NADPH + H(+). It participates in amino-acid biosynthesis; L-proline biosynthesis; L-glutamate 5-semialdehyde from L-glutamate: step 2/2. Functionally, catalyzes the NADPH-dependent reduction of L-glutamate 5-phosphate into L-glutamate 5-semialdehyde and phosphate. The product spontaneously undergoes cyclization to form 1-pyrroline-5-carboxylate. This Brucella anthropi (strain ATCC 49188 / DSM 6882 / CCUG 24695 / JCM 21032 / LMG 3331 / NBRC 15819 / NCTC 12168 / Alc 37) (Ochrobactrum anthropi) protein is Gamma-glutamyl phosphate reductase.